The sequence spans 498 residues: Polyamine aminopropyltransferase (498 aa).

6 consecutive transmembrane segments (helical) span residues 7-27 (ISVL…GTIA), 35-55 (VTQF…GSWL), 67-87 (FLEI…ILYL), 97-117 (IPLF…IPVL), 134-154 (VLSL…IFFA), and 163-183 (GFIF…VLPL). Residues 196 to 446 (VVVLTLLILG…AGQRPIQFKK (251 aa)) form a spermidine synthase region. Residues 200-439 (TLLILGFSYS…GEWGFVLAGQ (240 aa)) form the PABS domain. Q234 contributes to the S-methyl-5'-thioadenosine binding site. Spermidine contacts are provided by H264 and D288. S-methyl-5'-thioadenosine-binding positions include D308 and 342-343 (DA). The active-site Proton acceptor is D360.

The protein belongs to the spermidine/spermine synthase family. As to quaternary structure, homodimer or homotetramer.

The protein localises to the cell membrane. The enzyme catalyses S-adenosyl 3-(methylsulfanyl)propylamine + putrescine = S-methyl-5'-thioadenosine + spermidine + H(+). Its pathway is amine and polyamine biosynthesis; spermidine biosynthesis; spermidine from putrescine: step 1/1. Its function is as follows. Catalyzes the irreversible transfer of a propylamine group from the amino donor S-adenosylmethioninamine (decarboxy-AdoMet) to putrescine (1,4-diaminobutane) to yield spermidine. The protein is Polyamine aminopropyltransferase of Leptospira interrogans serogroup Icterohaemorrhagiae serovar copenhageni (strain Fiocruz L1-130).